We begin with the raw amino-acid sequence, 114 residues long: Fluoride-specific ion channel FluC 1 (114 aa).

The next 3 membrane-spanning stretches (helical) occupy residues 23 to 43 (ATLT…SYVF), 52 to 72 (LSTA…TLSV), and 84 to 104 (FLAM…SHLG). Na(+)-binding residues include Gly62 and Thr65.

It belongs to the fluoride channel Fluc/FEX (TC 1.A.43) family.

Its subcellular location is the cell membrane. It carries out the reaction fluoride(in) = fluoride(out). With respect to regulation, na(+) is not transported, but it plays an essential structural role and its presence is essential for fluoride channel function. Fluoride-specific ion channel. Important for reducing fluoride concentration in the cell, thus reducing its toxicity. The protein is Fluoride-specific ion channel FluC 1 of Desulfitobacterium hafniense (strain Y51).